Consider the following 613-residue polypeptide: Autophagy-related protein 22-2 (613 aa).

A disordered region spans residues 1-30; the sequence is MAFNSTPPVSPGGEAQQRPPRFPGEDTTPT. Residues 41–61 traverse the membrane as a helical segment; sequence YGIAAEVFAVCGVGSFLPLTL. The N-linked (GlcNAc...) asparagine glycan is linked to Asn-90. 7 helical membrane passes run 120 to 140, 167 to 187, 189 to 209, 278 to 298, 307 to 327, 382 to 402, and 418 to 438; these read SFAM…LISF, LFIF…VVGV, CLGS…ANDP, VGLG…MLFA, ISGT…WFSF, VIIF…VSGT, and VGLL…LWPV. N-linked (GlcNAc...) asparagine glycosylation occurs at Asn-448. 4 consecutive transmembrane segments (helical) span residues 453-473, 477-497, 508-528, and 553-573; these read LCIA…IPLF, GVVG…HGLV, FFGL…YAAT, and GFFF…MVNA. Residues 592 to 613 are disordered; it reads REHASEYGGPSEEAEGLLARDI.

This sequence belongs to the ATG22 family.

Its subcellular location is the vacuole membrane. Vacuolar effluxer which mediate the efflux of amino acids resulting from autophagic degradation. The release of autophagic amino acids allows the maintenance of protein synthesis and viability during nitrogen starvation. The polypeptide is Autophagy-related protein 22-2 (atg22-2) (Aspergillus fumigatus (strain ATCC MYA-4609 / CBS 101355 / FGSC A1100 / Af293) (Neosartorya fumigata)).